The primary structure comprises 80 residues: MDVKHIKDYLSWLYYQYLLITCSYVLEPWEQSIFNTLLLTIIAMVIYSSYIFIPIHVRLAVEFFSRIFGGQHESTVALMS.

Residues 1–11 are Cytoplasmic-facing; that stretch reads MDVKHIKDYLS. The helical transmembrane segment at 12–29 threads the bilayer; that stretch reads WLYYQYLLITCSYVLEPW. Topologically, residues 30–36 are lumenal; it reads EQSIFNT. The helical transmembrane segment at 37 to 57 threads the bilayer; the sequence is LLLTIIAMVIYSSYIFIPIHV. The Cytoplasmic portion of the chain corresponds to 58–80; the sequence is RLAVEFFSRIFGGQHESTVALMS.

Belongs to the SPTSS family. SPTSSB subfamily. As to quaternary structure, component of the serine palmitoyltransferase (SPT) complex, which is composed of SPTLC1, SPTLC2 or SPTLC3 and SPTSSA or SPTSSB. The heterodimer consisting of SPTLC1 and SPTLC2/SPTLC3 forms the catalytic core of the enzyme, while SPTSSA or SPTSSB subunits determine substrate specificity. SPT also interacts with ORMDL proteins, especially ORMDL3, which negatively regulate SPT activity in the presence of ceramides.

It is found in the endoplasmic reticulum membrane. It functions in the pathway lipid metabolism; sphingolipid metabolism. Component of the serine palmitoyltransferase multisubunit enzyme (SPT) that catalyzes the initial and rate-limiting step in sphingolipid biosynthesis by condensing L-serine and activated acyl-CoA (most commonly palmitoyl-CoA) to form long-chain bases. The SPT complex is composed of SPTLC1, SPTLC2 or SPTLC3 and SPTSSA or SPTSSB. Within this complex, the heterodimer consisting of SPTLC1 and SPTLC2/SPTLC3 forms the catalytic core. Within the SPT complex, SPTSSB stimulates the catalytic activity and plays a role in substrate specificity. SPT complexes with this subunit showing a preference for longer acyl-CoAs. The SPTLC1-SPTLC2-SPTSSB complex shows a strong preference for C18-CoA substrate, while the SPTLC1-SPTLC3-SPTSSB isozyme displays an ability to use a broader range of acyl-CoAs, without apparent preference. This chain is Serine palmitoyltransferase small subunit B (sptssb), found in Xenopus laevis (African clawed frog).